The chain runs to 593 residues: ATPase family AAA domain-containing protein 3-B (593 aa).

Disordered stretches follow at residues 1–64 (MSWL…LDQS), 109–129 (EEKRKTLNEETKQHQARAQYQ), and 145–164 (QLQNEENLRRQEESVQKQEA). The Mitochondrial intermembrane portion of the chain corresponds to 1–242 (MSWLFGLNRG…FRTFISDWDK (242 aa)). The segment covering 12–27 (PEPPGVPGFPEPPSPP) has biased composition (pro residues). Basic and acidic residues-rich tracts occupy residues 33 to 44 (GGDKNRPKDKWS), 53 to 64 (RAAKAARELDQS), 109 to 121 (EEKRKTLNEETKQ), and 150 to 164 (ENLRRQEESVQKQEA). Residues 51–215 (LERAAKAARE…QIRLKAAEHR (165 aa)) adopt a coiled-coil conformation. A helical membrane pass occupies residues 243–260 (VTATVAGLTLLAVGVYTA). The Mitochondrial matrix segment spans residues 261-593 (KNGTGVAGRY…LQPLLEGTPV (333 aa)). 348 to 355 (GPPGTGKT) is a binding site for ATP. Residues 570–580 (AEGKESTKEIG) are compositionally biased toward basic and acidic residues. A disordered region spans residues 570–593 (AEGKESTKEIGKNPLQPLLEGTPV).

This sequence belongs to the AAA ATPase family. In terms of assembly, can form homooligomers. Homodimer formation at the N-terminus may be regulated by ATP and is required for the interaction with the inner surface of the mitochondrial outer membrane and correct mitochondrial homeostasis.

The protein localises to the mitochondrion inner membrane. Its subcellular location is the mitochondrion matrix. It localises to the mitochondrion nucleoid. The enzyme catalyses ATP + H2O = ADP + phosphate + H(+). Its function is as follows. Essential for mitochondrial network organization, mitochondrial metabolism and cell growth at organism and cellular level. May play an important role in mitochondrial protein synthesis. May also participate in mitochondrial DNA replication. May bind to mitochondrial DNA D-loops and contribute to nucleoid stability. Required for enhanced channeling of cholesterol for hormone-dependent steroidogenesis. Involved in mitochondrial-mediated antiviral innate immunity. Required to protect mitochondria from the PERK-mediated unfolded protein response: specifically inhibits the activity of EIF2AK3/PERK at mitochondria-endoplasmic reticulum contact sites, thereby providing a safe haven for mitochondrial protein translation during endoplasmic reticulum stress. Ability to inhibit EIF2AK3/PERK is independent of its ATPase activity. Also involved in the mitochondrial DNA damage response by promoting signaling between damaged genomes and the mitochondrial membrane, leading to activation of the integrated stress response (ISR). The polypeptide is ATPase family AAA domain-containing protein 3-B (atad3-b) (Xenopus laevis (African clawed frog)).